The following is a 53-amino-acid chain: UPF0391 membrane protein YtjA (53 aa).

2 helical membrane passes run 4–24 (WGIIFLVIALIAAALGFGGLA) and 30–48 (AAKIVFVVGIILFLVSLFM).

Belongs to the UPF0391 family.

Its subcellular location is the cell membrane. The protein is UPF0391 membrane protein YtjA of Escherichia coli O6:K15:H31 (strain 536 / UPEC).